The sequence spans 485 residues: MEKKSVLILGTASHVGKSSVVTAICRILSREYRVAPFKAQNMSLNSWITKDGKEIGIAQAIQAKAAGTEPTADMNPVLLKPKGDCVSQIILLGEPYADRSAGKYYESIAEMNEVLEGALKRLCNEHDIIVMEGAGGAAEINLYERDIVNIGTARLTQAPIILVGDIERGGVFASLYGTVALLPEDVRKNVKGFIINKFRGDLEILKPGLKQLEEKTGIPVLGVLPYFKLNIPSEDSVSLEDKEAEKNEKEIEIAVIRLPRISNFTDFEPLERSAKIRYVELDEDLGTPDAIMIPGTKNTVNDLLDLKASGMAEKIQAFKGKIPIFGICGGYQMLGKTIYDSGVENGVEAEFEGLGLLDIGTKFGEYKKRTIQVTKKVSAYGPILAPIDGEEIKGYEIHMGITDSCRNIFGNDGAIDKAGLVIGTYLHGLFDNKNIRDALMQYLYEKKGLEYIPENSMTESDAYEELANVVEQNLDMEKFYEIIGI.

A GATase cobBQ-type domain is found at 250-435; sequence EIEIAVIRLP…LHGLFDNKNI (186 aa). Residue cysteine 328 is the Nucleophile of the active site. Residue histidine 427 is part of the active site.

This sequence belongs to the CobB/CobQ family. CobQ subfamily.

It functions in the pathway cofactor biosynthesis; adenosylcobalamin biosynthesis. Its function is as follows. Catalyzes amidations at positions B, D, E, and G on adenosylcobyrinic A,C-diamide. NH(2) groups are provided by glutamine, and one molecule of ATP is hydrogenolyzed for each amidation. The polypeptide is Probable cobyric acid synthase (Methanosarcina barkeri (strain Fusaro / DSM 804)).